The following is an 86-amino-acid chain: U15-lycotoxin-Ls1d (86 aa).

The first 20 residues, 1–20 (MNSKIFAVLFLLAFLSCVLS), serve as a signal peptide directing secretion. Residues 21–66 (DQYCPKSSITACKKMNIRNDCCKDDDCTGGSWCCATPCGNFCKYPT) form the WAP domain. 5 cysteine pairs are disulfide-bonded: cysteine 24–cysteine 54, cysteine 32–cysteine 58, cysteine 41–cysteine 53, cysteine 42–cysteine 80, and cysteine 47–cysteine 62.

Belongs to the venom protein 11 family. 01 (wap-1) subfamily. Post-translationally, contains 5 disulfide bonds. Expressed by the venom gland.

It is found in the secreted. Its function is as follows. Has antibacterial activity. The sequence is that of U15-lycotoxin-Ls1d from Lycosa singoriensis (Wolf spider).